Reading from the N-terminus, the 299-residue chain is Bifunctional protein FolD (299 aa).

Residues 166 to 168 (GRS), Ser-191, and Ile-232 each bind NADP(+).

It belongs to the tetrahydrofolate dehydrogenase/cyclohydrolase family. Homodimer.

The catalysed reaction is (6R)-5,10-methylene-5,6,7,8-tetrahydrofolate + NADP(+) = (6R)-5,10-methenyltetrahydrofolate + NADPH. The enzyme catalyses (6R)-5,10-methenyltetrahydrofolate + H2O = (6R)-10-formyltetrahydrofolate + H(+). It functions in the pathway one-carbon metabolism; tetrahydrofolate interconversion. In terms of biological role, catalyzes the oxidation of 5,10-methylenetetrahydrofolate to 5,10-methenyltetrahydrofolate and then the hydrolysis of 5,10-methenyltetrahydrofolate to 10-formyltetrahydrofolate. This Dinoroseobacter shibae (strain DSM 16493 / NCIMB 14021 / DFL 12) protein is Bifunctional protein FolD.